Here is a 258-residue protein sequence, read N- to C-terminus: Small ribosomal subunit protein eS1 (258 aa).

The segment at 235–258 (VASSGDAGSAVRRDGYEPPVQESV) is disordered.

This sequence belongs to the eukaryotic ribosomal protein eS1 family. As to quaternary structure, component of the small ribosomal subunit. Mature ribosomes consist of a small (40S) and a large (60S) subunit. The 40S subunit contains about 33 different proteins and 1 molecule of RNA (18S). The 60S subunit contains about 49 different proteins and 3 molecules of RNA (28S, 5.8S and 5S).

It is found in the cytoplasm. The polypeptide is Small ribosomal subunit protein eS1 (Trichoplax adhaerens (Trichoplax reptans)).